The sequence spans 167 residues: NAD(P)H-quinone oxidoreductase subunit I, chloroplastic (167 aa).

2 consecutive 4Fe-4S ferredoxin-type domains span residues 55 to 84 (GRIH…VDWK) and 95 to 124 (LNYS…MTEE). Residues cysteine 64, cysteine 67, cysteine 70, cysteine 74, cysteine 104, cysteine 107, cysteine 110, and cysteine 114 each contribute to the [4Fe-4S] cluster site.

The protein belongs to the complex I 23 kDa subunit family. NDH is composed of at least 16 different subunits, 5 of which are encoded in the nucleus. Requires [4Fe-4S] cluster as cofactor.

The protein localises to the plastid. The protein resides in the chloroplast thylakoid membrane. It carries out the reaction a plastoquinone + NADH + (n+1) H(+)(in) = a plastoquinol + NAD(+) + n H(+)(out). The enzyme catalyses a plastoquinone + NADPH + (n+1) H(+)(in) = a plastoquinol + NADP(+) + n H(+)(out). In terms of biological role, NDH shuttles electrons from NAD(P)H:plastoquinone, via FMN and iron-sulfur (Fe-S) centers, to quinones in the photosynthetic chain and possibly in a chloroplast respiratory chain. The immediate electron acceptor for the enzyme in this species is believed to be plastoquinone. Couples the redox reaction to proton translocation, and thus conserves the redox energy in a proton gradient. The polypeptide is NAD(P)H-quinone oxidoreductase subunit I, chloroplastic (Aethionema grandiflorum (Persian stone-cress)).